The chain runs to 660 residues: DNA mismatch repair protein MutL (660 aa).

Residues 408–436 (DQTSASASVKHASRSQDENQLSEHPNLDF) form a disordered region. Polar residues predominate over residues 425 to 436 (ENQLSEHPNLDF).

This sequence belongs to the DNA mismatch repair MutL/HexB family.

Functionally, this protein is involved in the repair of mismatches in DNA. It is required for dam-dependent methyl-directed DNA mismatch repair. May act as a 'molecular matchmaker', a protein that promotes the formation of a stable complex between two or more DNA-binding proteins in an ATP-dependent manner without itself being part of a final effector complex. This is DNA mismatch repair protein MutL from Streptococcus uberis (strain ATCC BAA-854 / 0140J).